The primary structure comprises 358 residues: Methylthioribose-1-phosphate isomerase (358 aa).

Substrate-binding positions include 54–56 (RGA), Arg-96, and Gln-205. The active-site Proton donor is Asp-246. Residue 256-257 (GK) participates in substrate binding.

Belongs to the eIF-2B alpha/beta/delta subunits family. MtnA subfamily.

The enzyme catalyses 5-(methylsulfanyl)-alpha-D-ribose 1-phosphate = 5-(methylsulfanyl)-D-ribulose 1-phosphate. It participates in amino-acid biosynthesis; L-methionine biosynthesis via salvage pathway; L-methionine from S-methyl-5-thio-alpha-D-ribose 1-phosphate: step 1/6. Its function is as follows. Catalyzes the interconversion of methylthioribose-1-phosphate (MTR-1-P) into methylthioribulose-1-phosphate (MTRu-1-P). This Pseudomonas putida (strain ATCC 47054 / DSM 6125 / CFBP 8728 / NCIMB 11950 / KT2440) protein is Methylthioribose-1-phosphate isomerase.